Here is a 58-residue protein sequence, read N- to C-terminus: Large ribosomal subunit protein bL32 (58 aa).

The protein belongs to the bacterial ribosomal protein bL32 family.

The protein is Large ribosomal subunit protein bL32 of Limosilactobacillus fermentum (strain NBRC 3956 / LMG 18251) (Lactobacillus fermentum).